Consider the following 180-residue polypeptide: uncharacterized protein (180 aa).

This is an uncharacterized protein from Magallana gigas (Pacific oyster).